Here is a 583-residue protein sequence, read N- to C-terminus: Kelch-like protein 38 (583 aa).

The 68-residue stretch at 34–101 (TDVILCTEDK…IYTGSITITM (68 aa)) folds into the BTB domain. Residues 136–237 (CLSMIRLSEI…HPTYLFQFIA (102 aa)) form the BACK domain. Kelch repeat units follow at residues 285 to 332 (TLVV…CIHS), 333 to 385 (ILYV…SYLH), 386 to 433 (FIFA…ANDQ), 435 to 481 (IYVF…VIED), 482 to 523 (KIYI…VINN), and 525 to 575 (LYVT…PLIC).

This is Kelch-like protein 38 (klhl38) from Danio rerio (Zebrafish).